We begin with the raw amino-acid sequence, 37 residues long: uncharacterized protein (37 aa).

The tract at residues 1-37 (MGQVEKARQGQFARPHHSDSQRRVRAWSRIQRRARSF) is disordered. Basic residues predominate over residues 23–37 (RVRAWSRIQRRARSF).

This is an uncharacterized protein from Bacillus phage phi105 (Bacteriophage phi-105).